An 836-amino-acid polypeptide reads, in one-letter code: Protein O-mannosyl-transferase tmtc2 (836 aa).

A helical transmembrane segment spans residues 1 to 21 (MIAELLSSALGLLLYLNTLGA). Over 22 to 77 (DFCYDDSRAIKTNQDLLPETPWNHIFFNDFWGTLLTHSGSHKSYRPLCTLSFRLNY) the chain is Extracellular. A helical transmembrane segment spans residues 78-98 (LFGGLDPWNYHLVNVLLHSAV). At 99 to 107 (TGLFTNLCK) the chain is on the cytoplasmic side. Residues 108-128 (ALFGSGCWTLIAGLLFASHPI) traverse the membrane as a helical segment. At 129–132 (HTEA) the chain is on the extracellular side. A helical transmembrane segment spans residues 133–153 (VSGIVGRADVGSGLFFLLSLL). The Cytoplasmic portion of the chain corresponds to 154-164 (CYMKHCSTRGY). Residues 165–185 (SLSSWCWILCAGFWAACSMLW) form a helical membrane-spanning segment. The Extracellular segment spans residues 186 to 188 (KEQ). A helical membrane pass occupies residues 189–209 (GVTVLAVSAVYDVFVFHKLKM). Residues 210–220 (NQIISVVFKEK) are Cytoplasmic-facing. A helical membrane pass occupies residues 221 to 241 (NVSFFFSVGLLFAWGVILLGA). At 242–312 (RFYWMGNTPP…KTITDWRNIH (71 aa)) the chain is on the extracellular side. Residues 313 to 333 (TVAFYILLILLAYSSLKGSAI) traverse the membrane as a helical segment. At 334–392 (KRDCNGKVFMNGKQNTNGHSCQSDLEHKNAEQNPVIASKLENGVKHHNSHEMQLPSTEN) the chain is on the cytoplasmic side. A helical membrane pass occupies residues 393 to 413 (IVVLALSLLIVPFVPASNLFF). Position 414 (Tyr-414) is a topological domain, extracellular. A helical transmembrane segment spans residues 415–435 (VGFVIAERVLYIPSMGFCLLV). Residues 436-449 (TVGARALYIKAQKN) are Cytoplasmic-facing. A helical transmembrane segment spans residues 450 to 470 (ILKNLLFYATAALIVFYGLKT). At 471 to 836 (VVRNGDWKNE…EKQGLKNSKT (366 aa)) the chain is on the extracellular side. TPR repeat units lie at residues 493–526 (AKAWGNLGNVLKSQSKIDEAENAYRNALYYRSNM), 527–560 (ADMLYNLGLLLQENSKFSEALHYYKLAIGSRPTL), 561–594 (ASGYLNTGIILMNQGRTEEARRTFLKCSEIPDEN), 606–639 (TSCLYNLGKLYHEQGQYEDALIVYKEAIQKMPRQ), 643–676 (QSLYNMMGEAYMRLNVVSEAEHWYTESLKSKPDH), 677–710 (IPAHLTYGKLLTLTGRKNEAERYFLKAIQLDPNK), 711–744 (GNCYMHYGQFLLEEGRILEAAEMAKKAAELDSSE), 745–778 (FDVVFNAAHMLRQASLNEEAEKFYKLAAGLRQNY), and 779–812 (PAALMNLGAILHLNGKLEEAEYNYLRALQLKPDD).

It belongs to the TMTC family.

The protein localises to the membrane. It is found in the endoplasmic reticulum. The catalysed reaction is a di-trans,poly-cis-dolichyl beta-D-mannosyl phosphate + L-seryl-[protein] = 3-O-(alpha-D-mannosyl)-L-seryl-[protein] + a di-trans,poly-cis-dolichyl phosphate + H(+). It carries out the reaction a di-trans,poly-cis-dolichyl beta-D-mannosyl phosphate + L-threonyl-[protein] = 3-O-(alpha-D-mannosyl)-L-threonyl-[protein] + a di-trans,poly-cis-dolichyl phosphate + H(+). It functions in the pathway protein modification; protein glycosylation. Its function is as follows. Transfers mannosyl residues to the hydroxyl group of serine or threonine residues. The chain is Protein O-mannosyl-transferase tmtc2 (tmtc2) from Xenopus laevis (African clawed frog).